The primary structure comprises 224 residues: UPF0319 protein VC_1853 (224 aa).

Positions 1–21 are cleaved as a signal peptide; it reads MKLNPLILGLLLSFSAGHSLA.

It belongs to the UPF0319 family.

This chain is UPF0319 protein VC_1853, found in Vibrio cholerae serotype O1 (strain ATCC 39315 / El Tor Inaba N16961).